The chain runs to 445 residues: MVRMEDIISLAKRKGFVFQSSEVYGGLSGAWDYGPLGVELKKNIKKEWWKSMVYLHENIVGLDSAIFMRPEIWRASGHVDGFSDSMVDCKDCKSRFRADFIDLSKNCPNCKVGNNFTSPRSFNLMFKTHIGVVEDSSSEVYLRPETAQGIFVNFRNVLDSSRLKIPFGIAQVGKAFRNEIVTKNFIFRTCEFEQMEMQFFVHPKQIDEWFCYWQQNRMNFFIETLKISPDRLRFKAHDSTQLAHYAKAAFDIEYEFPFGFQEVEGIHNRGNYDLTQHAKFSNKPKVFEYHDLLTKEKYVPYVIETSAGLTRSVLMTLCDAYSEEELSDGDKRIVLRLHPKLAPYKIAIFPLVKKVELTEIARRIYMELCDDFHIFYDDSGTIGKRYRRQDEIGTPYCVTIDYNTIEDETVTVRERNSMTQKRIFINDLYSYIKTEILNYKEDFNK.

Residues Arg97 and Glu145 each contribute to the substrate site. ATP-binding positions include 177-179, 187-192, 262-263, and 308-311; these read RNE, FRTCEF, EV, and GLTR. 192–196 lines the substrate pocket; it reads FEQME. Position 304–308 (304–308) interacts with substrate; it reads ETSAG.

Belongs to the class-II aminoacyl-tRNA synthetase family. As to quaternary structure, homodimer.

It localises to the cytoplasm. It carries out the reaction tRNA(Gly) + glycine + ATP = glycyl-tRNA(Gly) + AMP + diphosphate. In terms of biological role, catalyzes the attachment of glycine to tRNA(Gly). The chain is Glycine--tRNA ligase from Borreliella burgdorferi (strain ATCC 35210 / DSM 4680 / CIP 102532 / B31) (Borrelia burgdorferi).